An 811-amino-acid polypeptide reads, in one-letter code: Bifunctional enzyme MurC/Ddl (811 aa).

Residues 1–450 (MNRKNHYHFI…GNALKDFEPK (450 aa)) form a UDP-N-acetylmuramate--alanine ligase region. Residues 111–117 (GSHGKTT) and 607–662 (LETF…SREI) contribute to the ATP site. The D-alanine--D-alanine ligase stretch occupies residues 451–811 (KLSVGVVCGG…NKQCLLTAKS (361 aa)). An ATP-grasp domain is found at 574 to 785 (KRLAASVGVP…FEQIVHQLII (212 aa)). Positions 739, 752, and 754 each coordinate Mg(2+).

The protein in the N-terminal section; belongs to the MurCDEF family. It in the C-terminal section; belongs to the D-alanine--D-alanine ligase family. Mg(2+) is required as a cofactor. It depends on Mn(2+) as a cofactor.

The protein resides in the cytoplasm. The enzyme catalyses UDP-N-acetyl-alpha-D-muramate + L-alanine + ATP = UDP-N-acetyl-alpha-D-muramoyl-L-alanine + ADP + phosphate + H(+). It catalyses the reaction 2 D-alanine + ATP = D-alanyl-D-alanine + ADP + phosphate + H(+). It participates in cell wall biogenesis; peptidoglycan biosynthesis. The sequence is that of Bifunctional enzyme MurC/Ddl (murC/ddlA) from Chlamydia caviae (strain ATCC VR-813 / DSM 19441 / 03DC25 / GPIC) (Chlamydophila caviae).